The chain runs to 598 residues: Nuclear receptor subfamily 4 group A member 2 (598 aa).

The segment at 1-22 (MPCVQAQYGSSPQGASPASQGY) is disordered. Polar residues predominate over residues 7–18 (QYGSSPQGASPA). A DNA-binding region (nuclear receptor) is located at residues 260-335 (EGLCAVCGDN…VGMVKEVVRT (76 aa)). 2 NR C4-type zinc fingers span residues 263–283 (CAVC…CEGC) and 299–318 (CLAN…CQYC). The Bipartite nuclear localization signal (NLS1) motif lies at 287–314 (FKRTVQKNAKYVCLANKNCPVDKRRRNR). The interval 337–361 (SLKGRRGRLPSKPKSPQEPSPPSPP) is disordered. The Nuclear localization signal (NLS1) signature appears at 338–350 (LKGRRGRLPSKPK). A compositionally biased stretch (pro residues) spans 352-361 (PQEPSPPSPP). The NR LBD domain maps to 360-595 (PPVSLISALV…AIIDKLFLDT (236 aa)). The nuclear export sequence (NES1) motif lies at 443–452 (FLELFVLRLA). The nuclear export sequence (NES2) motif lies at 568–577 (QGLQRIFYLK).

Belongs to the nuclear hormone receptor family. As to quaternary structure, interacts with SFPQ, NCOR2, SIN3A and HADC1. The interaction with NCOR2 increases in the absence of PITX3. Interacts with PER2.

The protein resides in the cytoplasm. It localises to the nucleus. Its function is as follows. Transcriptional regulator which is important for the differentiation and maintenance of meso-diencephalic dopaminergic (mdDA) neurons during development. It is crucial for expression of a set of genes such as SLC6A3, SLC18A2, TH and DRD2 which are essential for development of mdDA neurons. This is Nuclear receptor subfamily 4 group A member 2 (NR4A2) from Pongo abelii (Sumatran orangutan).